The primary structure comprises 443 residues: Chromosomal replication initiator protein DnaA (443 aa).

Residues 1-73 are domain I, interacts with DnaA modulators; the sequence is MYGDHRQIWE…YDAASKATNK (73 aa). The domain II stretch occupies residues 73–106; the sequence is KLYEIKILSEDEEEYREIKESIEKENLTESTTLS. Positions 107 to 323 are domain III, AAA+ region; it reads TLNPKYTFDT…GALIRIVAFS (217 aa). Residues Gly151, Gly153, Lys154, and Thr155 each contribute to the ATP site. A domain IV, binds dsDNA region spans residues 324–443; that stretch reads NLTKANIDLE…EELKKRIKGY (120 aa).

The protein belongs to the DnaA family. In terms of assembly, oligomerizes as a right-handed, spiral filament on DNA at oriC.

The protein resides in the cytoplasm. Its function is as follows. Plays an essential role in the initiation and regulation of chromosomal replication. ATP-DnaA binds to the origin of replication (oriC) to initiate formation of the DNA replication initiation complex once per cell cycle. Binds the DnaA box (a 9 base pair repeat at the origin) and separates the double-stranded (ds)DNA. Forms a right-handed helical filament on oriC DNA; dsDNA binds to the exterior of the filament while single-stranded (ss)DNA is stabiized in the filament's interior. The ATP-DnaA-oriC complex binds and stabilizes one strand of the AT-rich DNA unwinding element (DUE), permitting loading of DNA polymerase. After initiation quickly degrades to an ADP-DnaA complex that is not apt for DNA replication. Binds acidic phospholipids. In Thermoanaerobacter pseudethanolicus (strain ATCC 33223 / 39E) (Clostridium thermohydrosulfuricum), this protein is Chromosomal replication initiator protein DnaA.